A 655-amino-acid polypeptide reads, in one-letter code: Probable inactive receptor kinase At1g48480 (655 aa).

The signal sequence occupies residues 1–32 (MRVFFFPNSSMAILSVFLSLLLLSLPLPSTQD). LRR repeat units follow at residues 71–95 (SNRVTALRLPGVALSGDIPEGIFGN), 98–120 (QLRTLSLRLNALSGSLPKDLSTS), 122–144 (NLRHLYLQGNRFSGEIPEVLFSL), 146–169 (HLVRLNLASNSFTGEISSGFTNLT), 170–192 (KLKTLFLENNQLSGSIPDLDLPL), and 194–215 (QFNVSNNSLNGSIPKNLQRFES). Residues 234-260 (EETVPSQPTSGGNRTPPSVEGSEEKKK) are disordered. Positions 237 to 249 (VPSQPTSGGNRTP) are enriched in polar residues. A helical membrane pass occupies residues 269–289 (IAGIVIGCVVGFALIVLILMV). The Protein kinase domain occupies 371 to 646 (RASAEVLGKG…RKMENLRPYS (276 aa)). A Phosphoserine modification is found at S373. Position 377–385 (377–385 (LGKGTFGTA)) interacts with ATP. At T394 the chain carries Phosphothreonine. K399 provides a ligand contact to ATP. Residue S450 is modified to Phosphoserine. The residue at position 526 (T526) is a Phosphothreonine. S546 is subject to Phosphoserine. The residue at position 622 (T622) is a Phosphothreonine.

It belongs to the protein kinase superfamily. As to expression, highly expressed in seedlings and leaves. Lower expression in roots, stems, flowers and siliques. Detected in the vascular tissues of roots, in the trichomes of young rosettes leaves and hydathodes, in the floral abscission zones, in filament apex and stomata cells of anthers, in inflorescence stems and in sepals.

The protein localises to the cell membrane. In Arabidopsis thaliana (Mouse-ear cress), this protein is Probable inactive receptor kinase At1g48480 (RKL1).